We begin with the raw amino-acid sequence, 326 residues long: Tagatose 1,6-diphosphate aldolase (326 aa).

This sequence belongs to the aldolase LacD family.

The enzyme catalyses D-tagatofuranose 1,6-bisphosphate = D-glyceraldehyde 3-phosphate + dihydroxyacetone phosphate. It participates in carbohydrate metabolism; D-tagatose 6-phosphate degradation; D-glyceraldehyde 3-phosphate and glycerone phosphate from D-tagatose 6-phosphate: step 2/2. The sequence is that of Tagatose 1,6-diphosphate aldolase from Staphylococcus aureus (strain Mu3 / ATCC 700698).